Here is a 415-residue protein sequence, read N- to C-terminus: Serine/threonine transporter SstT (415 aa).

8 helical membrane passes run 23-43, 47-67, 85-105, 144-164, 181-201, 220-240, 293-313, and 333-353; these read ILIG…AAIA, LGTL…LMLV, ILFL…LFSF, ALLN…GFAL, AVTF…FGLV, LLVL…LLVF, IPLG…VLTL, and VVAS…LLLI.

It belongs to the dicarboxylate/amino acid:cation symporter (DAACS) (TC 2.A.23) family.

It is found in the cell inner membrane. The catalysed reaction is L-serine(in) + Na(+)(in) = L-serine(out) + Na(+)(out). The enzyme catalyses L-threonine(in) + Na(+)(in) = L-threonine(out) + Na(+)(out). Its function is as follows. Involved in the import of serine and threonine into the cell, with the concomitant import of sodium (symport system). This is Serine/threonine transporter SstT from Klebsiella pneumoniae subsp. pneumoniae (strain ATCC 700721 / MGH 78578).